The chain runs to 88 residues: uncharacterized protein (88 aa).

The dksA C4-type zinc finger occupies 39 to 63 (CEECGAPIPQARREAIPGVRLCIHC).

This is an uncharacterized protein from Escherichia coli (strain K12).